Consider the following 650-residue polypeptide: Threonine--tRNA ligase (650 aa).

The TGS domain occupies 1–66 (MVQITLPDGS…DQDAKLAIVT (66 aa)). Residues 247–538 (DHRKIGRDLD…LIENHAGAMP (292 aa)) form a catalytic region. Positions 338, 389, and 515 each coordinate Zn(2+).

The protein belongs to the class-II aminoacyl-tRNA synthetase family. Homodimer. It depends on Zn(2+) as a cofactor.

It is found in the cytoplasm. The enzyme catalyses tRNA(Thr) + L-threonine + ATP = L-threonyl-tRNA(Thr) + AMP + diphosphate + H(+). Its function is as follows. Catalyzes the attachment of threonine to tRNA(Thr) in a two-step reaction: L-threonine is first activated by ATP to form Thr-AMP and then transferred to the acceptor end of tRNA(Thr). Also edits incorrectly charged L-seryl-tRNA(Thr). The chain is Threonine--tRNA ligase from Bordetella avium (strain 197N).